The following is a 255-amino-acid chain: Receptor expression-enhancing protein 3 (255 aa).

Transmembrane regions (helical) follow at residues 1-21 (MVSW…YPAY), 35-55 (YVRW…ETVA), and 59-79 (VAWF…LLSP). The interval 158-242 (TIQGDEPVGQ…KGRKEVRYGS (85 aa)) is disordered. Residue Thr-201 is modified to Phosphothreonine. Ser-210 is subject to Phosphoserine. Polar residues predominate over residues 222–231 (RSQSMKSVKT).

The protein belongs to the DP1 family. As to expression, expressed in circumvallate papillae.

It is found in the endoplasmic reticulum membrane. Functionally, microtubule-binding protein required to ensure proper cell division and nuclear envelope reassembly by sequestering the endoplasmic reticulum away from chromosomes during mitosis. Probably acts by clearing the endoplasmic reticulum membrane from metaphase chromosomes. This Homo sapiens (Human) protein is Receptor expression-enhancing protein 3 (REEP3).